We begin with the raw amino-acid sequence, 106 residues long: Large ribosomal subunit protein cL38 (106 aa).

Residues Met1 to Glu39 constitute a chloroplast transit peptide. The interval Ser42–Thr70 is disordered. Positions Pro44–Lys59 are enriched in basic residues.

Belongs to the chloroplast-specific ribosomal protein cL38 family. In terms of assembly, part of the 50S ribosomal subunit.

Its subcellular location is the plastid. It is found in the chloroplast. The chain is Large ribosomal subunit protein cL38 (PSRP6) from Arabidopsis thaliana (Mouse-ear cress).